The following is a 224-amino-acid chain: CDP-diacylglycerol--inositol 3-phosphatidyltransferase (224 aa).

Residues 1–8 (MTIAEHDN) are Cytoplasmic-facing. Residues 9–29 (VFIFVPNLIGYARIVLALIAF) form a helical membrane-spanning segment. The Lumenal segment spans residues 30-35 (WFMSTN). A helical membrane pass occupies residues 36-52 (YVISGWCYVTSALLDAV). Positions 50 and 53 each coordinate Mg(2+). Topologically, residues 53 to 76 (DGQAARAFNQSTRFGAMLDQLTDR) are cytoplasmic. Glycine 54, arginine 58, and threonine 64 together coordinate a CDP-1,2-diacyl-sn-glycerol. The Mg(2+) site is built by aspartate 71 and aspartate 75. Aspartate 75 acts as the Proton acceptor in catalysis. The chain crosses the membrane as a helical span at residues 77 to 97 (CGTTGLLVTLAYFYPRYMFWF). Residue glutamine 98 is a topological domain, lumenal. Residues 99-119 (LSIAIDVACHWLFMQTSVVVG) traverse the membrane as a helical segment. Topologically, residues 120–138 (RSSHKVNDNFIMRLYYQKD) are cytoplasmic. Residues 139–159 (ILTFMCCVNELFYVCLYLLHF) form a helical membrane-spanning segment. Over 160-163 (TYGP) the chain is Lumenal. The helical transmembrane segment at 164-184 (LIFGASLFKILAFLTGPFAVL) threads the bilayer. Topologically, residues 185–224 (KALISVMHAYVAGIDLAAVDVRERQERRQKSEPVSGKKVE) are cytoplasmic.

It belongs to the CDP-alcohol phosphatidyltransferase class-I family. It depends on Mn(2+) as a cofactor. Mg(2+) is required as a cofactor. In terms of tissue distribution, in adults, expression is higher in the head than in the body (at protein level).

The protein localises to the apical cell membrane. It is found in the lateral cell membrane. The catalysed reaction is a CDP-1,2-diacyl-sn-glycerol + myo-inositol = a 1,2-diacyl-sn-glycero-3-phospho-(1D-myo-inositol) + CMP + H(+). Functionally, catalyzes the biosynthesis of phosphatidylinositol (PtdIns) as well as PtdIns:inositol exchange reaction. May thus act to reduce an excessive cellular PtdIns content. The exchange activity is due to the reverse reaction of PtdIns synthase and is dependent on CMP, which is tightly bound to the enzyme. Required for the regeneration of the signaling molecule phosphatidylinositol 4,5-bisphosphate (PtdInsP2) from phosphatidic acid (PA) and maintenance of its steady supply during signaling, thus playing an essential role during phospholipase C-mediated transduction. This function is essential in photoreceptors for light-activated recycling of PtdInsP2 during phototransduction. As a key enzyme of the phosphoinositide pathway, indirectly involved in the polarized secretion of basal membrane (BM) proteins in follicle epithelial (FE) cells through promoting PtdInsP2 synthesis in the apical and lateral plasma membranes of FE cells. PtdInsP2 controls the localization of Crag and perhaps the localization and expression of strat, both of which are essential for restricting the secretion of BM proteins to the basal surface. In Drosophila melanogaster (Fruit fly), this protein is CDP-diacylglycerol--inositol 3-phosphatidyltransferase.